A 606-amino-acid chain; its full sequence is MCGIFGYLGEKNAVPLVLEGLSKLEYRGYDSAGIATLVEGRLFVEKAVGPVSQLCSAVSSDIHSQAAIGHTRWATHGEPSRFNAHPHVDMDASCALVHNGIIENFQKLKEELEEQGVVFSSDTDTEVIVQLFARRYKETRDLIQSFSWTLKRLQGSFACALMHQDHPEVLLCAAHESPLILGLGEDEVFISSDIHAFLKYSGCTQTLASGELAVLRIGKSIETYNFELARIQKEVRCIDHTEDSLDKKGFDYYMLKELYEQPEVFERILHLTCEENGFTESFLKGFSLDEIQSLHIVACGSSYHAGYLAKYVIESIASIPVYVETASEFRYRQPYIAEHSLAILISQSGETADTLAALNEFRKLSKARVLGICNVRESALASRVDHCLFIEAGLEVGVASTKAFTAQLLLLILLGLRLANHRQVIAQEDLAQAIQGLKDLPNLTRLFLDSSIHDWRCRQIEETSFIFLGRRFMYPICMEAALKLKEIAYVEANAYPAGEMKHGPIALIREGTPVIVYCGDRSVYTKTIGAIMEVKARKAYVIALAPESNRDIAAVSDEQIYIPDSHDLAAPILFTIAGQIMAYTMALQRGTEVDRPRNLAKSVTVE.

Catalysis depends on Cys-2, which acts as the Nucleophile; for GATase activity. The 217-residue stretch at 2 to 218 (CGIFGYLGEK…SGELAVLRIG (217 aa)) folds into the Glutamine amidotransferase type-2 domain. SIS domains follow at residues 278–424 (FTES…HRQV) and 448–596 (LDSS…VDRP). Residue Lys-601 is the For Fru-6P isomerization activity of the active site.

As to quaternary structure, homodimer.

The protein localises to the cytoplasm. The catalysed reaction is D-fructose 6-phosphate + L-glutamine = D-glucosamine 6-phosphate + L-glutamate. Catalyzes the first step in hexosamine metabolism, converting fructose-6P into glucosamine-6P using glutamine as a nitrogen source. This chain is Glutamine--fructose-6-phosphate aminotransferase [isomerizing], found in Chlamydia trachomatis serovar D (strain ATCC VR-885 / DSM 19411 / UW-3/Cx).